A 290-amino-acid chain; its full sequence is Cbb3-type cytochrome c oxidase subunit CcoP (290 aa).

Residues 1–22 (MSVKPTKQKPGEPPTTGHSWDG) form a disordered region. Topologically, residues 1 to 37 (MSVKPTKQKPGEPPTTGHSWDGIEEFDNPMPRWWLWT) are cytoplasmic. Residues 38 to 58 (FYVTIVWAIGYSILYPAWPLI) traverse the membrane as a helical segment. Residues 59–290 (NGATNGLIGH…VYVHGLGGGE (232 aa)) are Periplasmic-facing. Cytochrome c domains are found at residues 109–199 (YATN…LQIS) and 206–287 (ALSA…HGLG). Heme c-binding residues include Cys-122, Cys-125, His-126, Met-174, Cys-219, Cys-222, His-223, and Met-264.

It belongs to the CcoP / FixP family. Component of the cbb3-type cytochrome c oxidase at least composed of CcoN, CcoO, CcoQ and CcoP. Heme c is required as a cofactor.

The protein resides in the cell inner membrane. It participates in energy metabolism; oxidative phosphorylation. C-type cytochrome. Part of the cbb3-type cytochrome c oxidase complex. CcoP subunit is required for transferring electrons from donor cytochrome c via its heme groups to CcoO subunit. From there, electrons are shuttled to the catalytic binuclear center of CcoN subunit where oxygen reduction takes place. The complex also functions as a proton pump. In Cereibacter sphaeroides (strain ATCC 17023 / DSM 158 / JCM 6121 / CCUG 31486 / LMG 2827 / NBRC 12203 / NCIMB 8253 / ATH 2.4.1.) (Rhodobacter sphaeroides), this protein is Cbb3-type cytochrome c oxidase subunit CcoP.